A 577-amino-acid chain; its full sequence is Torulene dioxygenase (577 aa).

Residues 1 to 20 form a disordered region; sequence MALNGPGVYHRTREHEQEDA. 4 residues coordinate Fe(2+): H239, H291, H361, and H570.

It belongs to the carotenoid oxygenase family. Fe(2+) is required as a cofactor.

Its subcellular location is the cytoplasm. The protein localises to the cytosol. It catalyses the reaction torulene + O2 = 4'-apo-beta-carotenal + 3-methyl-2-butenal. Its pathway is carotenoid biosynthesis. Functionally, torulene dioxygenase; part of pathway that mediates the biosynthesis of neurosporaxanthin, a carboxylic apocarotenoid acting as an essential protective pigments and leading to orange pigmentation. CarT mediates the cleavage of torulene into beta-apo-4'-carotenal, the aldehyde corresponding to the acidic neurosporaxanthin. Is also active on other monocyclic synthetic substrates such as beta-apo-8'-carotenal and beta-apo-10'-carotenal to produce beta-apo-14'-carotenal and retinal(beta-apo-15'-carotenal), respectively. Neurosporaxanthin is synthesized from geranyl-geranyl pyrophosphate (GGPP) through several enzymatic activities. Phytoene synthase activity performed by the bifunctional enzyme carAR first produces phytoene from geranyl-geranyl pyrophosphate (GGPP). The phytoene dehydrogenase carB then introduces 4 desaturations to lead to lycopene which is substrate of the carotene cyclase activity of carAR that leads to the production of gamma-carotene. CarB then performs a 5th desaturation reaction to yield torulene. Torulene is the substrate of the dioxidase carT that breaks the molecule, removing five carbon atoms to yield beta-apo-4'-carotenal, whereas the aldehyde dehydrogenase carD mediates the last step by converting beta-apo-4'-carotenal into neurosporaxanthin. This chain is Torulene dioxygenase, found in Gibberella fujikuroi (strain CBS 195.34 / IMI 58289 / NRRL A-6831) (Bakanae and foot rot disease fungus).